The following is a 169-amino-acid chain: Inorganic pyrophosphatase (169 aa).

Substrate-binding residues include Lys-26, Arg-40, and Tyr-52. Mg(2+) is bound by residues Asp-62, Asp-67, and Asp-99. Residue Tyr-138 coordinates substrate.

Belongs to the PPase family. Homohexamer. Requires Mg(2+) as cofactor.

The protein resides in the cytoplasm. The enzyme catalyses diphosphate + H2O = 2 phosphate + H(+). Functionally, catalyzes the hydrolysis of inorganic pyrophosphate (PPi) forming two phosphate ions. The sequence is that of Inorganic pyrophosphatase from Thermoplasma volcanium (strain ATCC 51530 / DSM 4299 / JCM 9571 / NBRC 15438 / GSS1).